We begin with the raw amino-acid sequence, 351 residues long: 3-dehydroquinate synthase (351 aa).

Residues 60–65 (DGEEYK), 94–98 (GVISD), 118–119 (TT), K131, K140, and 158–161 (FLKT) contribute to the NAD(+) site. Positions 173, 239, and 256 each coordinate Zn(2+).

This sequence belongs to the sugar phosphate cyclases superfamily. Dehydroquinate synthase family. Co(2+) is required as a cofactor. It depends on Zn(2+) as a cofactor. Requires NAD(+) as cofactor.

The protein resides in the cytoplasm. The enzyme catalyses 7-phospho-2-dehydro-3-deoxy-D-arabino-heptonate = 3-dehydroquinate + phosphate. It participates in metabolic intermediate biosynthesis; chorismate biosynthesis; chorismate from D-erythrose 4-phosphate and phosphoenolpyruvate: step 2/7. Functionally, catalyzes the conversion of 3-deoxy-D-arabino-heptulosonate 7-phosphate (DAHP) to dehydroquinate (DHQ). This is 3-dehydroquinate synthase from Campylobacter jejuni subsp. doylei (strain ATCC BAA-1458 / RM4099 / 269.97).